A 185-amino-acid polypeptide reads, in one-letter code: Ribosome-recycling factor (185 aa).

The interval 144 to 164 (KEGEAGEDEVGRAEKDLDKTT) is disordered.

The protein belongs to the RRF family.

The protein localises to the cytoplasm. Its function is as follows. Responsible for the release of ribosomes from messenger RNA at the termination of protein biosynthesis. May increase the efficiency of translation by recycling ribosomes from one round of translation to another. The polypeptide is Ribosome-recycling factor (Mycobacterium tuberculosis (strain CDC 1551 / Oshkosh)).